A 224-amino-acid polypeptide reads, in one-letter code: Peptidyl-prolyl cis-trans isomerase FKBP3 (224 aa).

The residue at position 2 (Ala2) is an N-acetylalanine. Ser36 is modified (phosphoserine). Over residues Lys89–Glu102 the composition is skewed to basic and acidic residues. A disordered region spans residues Lys89–Lys113. Lys99 carries the N6-acetyllysine modification. In terms of domain architecture, PPIase FKBP-type spans Gly128–Asp224. Ser152 is subject to Phosphoserine. Lys170 carries the post-translational modification N6-acetyllysine.

Belongs to the FKBP-type PPIase family.

It localises to the nucleus. The catalysed reaction is [protein]-peptidylproline (omega=180) = [protein]-peptidylproline (omega=0). Inhibited preferentially by rapamycin over FK506. In terms of biological role, FK506- and rapamycin-binding proteins (FKBPs) constitute a family of receptors for the two immunosuppressants which inhibit T-cell proliferation by arresting two dinstinct cytoplasmic signal transmission pathways. PPIases accelerate the folding of proteins. The sequence is that of Peptidyl-prolyl cis-trans isomerase FKBP3 (FKBP3) from Bos taurus (Bovine).